Consider the following 164-residue polypeptide: Large ribosomal subunit protein eL24z (164 aa).

The span at 117–133 (ERIKKTKDEKKAKKVEY) shows a compositional bias: basic and acidic residues. Residues 117-164 (ERIKKTKDEKKAKKVEYASKQQKSQVKGNIPKSAAPKAAKMGGGGGRR) form a disordered region.

The protein belongs to the eukaryotic ribosomal protein eL24 family. In terms of assembly, interacts with the cauliflower mosaic virus transactivator TAV to form a TAV/60S complex. Interacts with REIL1 AND REIL2.

Functionally, might have an extraribosomal function in reinitiation of translation. The sequence is that of Large ribosomal subunit protein eL24z (RPL24A) from Arabidopsis thaliana (Mouse-ear cress).